We begin with the raw amino-acid sequence, 520 residues long: MENIEKLLMQEKILMLELDLVRAKISLARANGSSQQGDLPLHRETPVKEEAVHSALATFTPTQVKAIPEQTAPGKESTNPLMASILPKDMNPVQTGIRLAVPGDFLRPHQGIPIPQKSELSSIVAPLRAESGIHHPHINYYVVYNGPHAGIYDDWGCTKAATNGVPGVAYKKFATITEARAAADAYTTSQQTDRLNFIPKGEAQLKPKSFAKALTSPPKQKAHWLTLGTKRPSSDPAPKEISFAPEITMDDFLYLYDLGRKFDGEGDDTMFTTDNEKISLFNFRKNADPQMVREAYAAGLIKTIYPSNNLQEIKYLPKKVKDAVKRFRTNCIKNTEKDIFLKIRSTIPVWTIQGLLHKPRQVIEIGVSKKVVPTESKAMESKIQIEDLTELAVKTGEQFIQSLLRLNDKKKIFVNMVEHDTLVYSKNIKDTVSEDQRAIETFQQRVISGNLLGFHCPAICHFIKRTVEKEGGTYKCHHCDKGKAIVQDASADSGPKDGPPPTRSIVEKEDVPTTSSKQVD.

The disordered stretch occupies residues 487 to 520 (QDASADSGPKDGPPPTRSIVEKEDVPTTSSKQVD).

The protein belongs to the caulimoviridae viroplasmin family.

The protein localises to the host cytoplasm. In terms of biological role, enhances the ribosomal termination-reinitiation event leading to the translation of major open reading frames on the polycistronic viral RNAs. The chain is Transactivator/viroplasmin protein from Cauliflower mosaic virus (strain CM-1841) (CaMV).